We begin with the raw amino-acid sequence, 174 residues long: Large ribosomal subunit protein uL18 (174 aa).

Belongs to the universal ribosomal protein uL18 family. In terms of assembly, part of the 50S ribosomal subunit. Contacts the 5S and 23S rRNAs.

This is one of the proteins that bind and probably mediate the attachment of the 5S RNA into the large ribosomal subunit, where it forms part of the central protuberance. This Methanosarcina acetivorans (strain ATCC 35395 / DSM 2834 / JCM 12185 / C2A) protein is Large ribosomal subunit protein uL18.